The following is a 158-amino-acid chain: L-alanine exporter AlaE (158 aa).

The next 4 helical transmembrane spans lie at 23–43 (FAMV…VSGM), 53–73 (LVAI…RDAV), 92–112 (VIAY…FVGA), and 117–137 (IITA…AYGY).

It belongs to the AlaE exporter family.

It is found in the cell inner membrane. Its function is as follows. Exports L-alanine. The polypeptide is L-alanine exporter AlaE (Cronobacter sakazakii (strain ATCC BAA-894) (Enterobacter sakazakii)).